The following is a 167-amino-acid chain: uncharacterized protein (167 aa).

This is an uncharacterized protein from Homo sapiens (Human).